Here is a 356-residue protein sequence, read N- to C-terminus: V-type proton ATPase subunit d (356 aa).

Belongs to the V-ATPase V0D/AC39 subunit family. In terms of assembly, V-ATPase is a heteromultimeric enzyme composed of a peripheral catalytic V1 complex (components A to H) attached to an integral membrane V0 proton pore complex (components: a, c, c', c'' and d).

Its function is as follows. Subunit of the integral membrane V0 complex of vacuolar ATPase. Vacuolar ATPase is responsible for acidifying a variety of intracellular compartments in eukaryotic cells, thus providing most of the energy required for transport processes in the vacuolar system. The sequence is that of V-type proton ATPase subunit d (vatD-1) from Dictyostelium discoideum (Social amoeba).